The primary structure comprises 744 residues: Polyribonucleotide nucleotidyltransferase (744 aa).

Positions 515 and 521 each coordinate Mg(2+). The 60-residue stretch at 581 to 640 (PRVITVQVPVDKIGEVIGPKGKMINQIQDDTGADISIEDDGTVFIGATDGPSAEAARQAI) folds into the KH domain. Residues 652–724 (GERFVGTVVK…PRGKLSLHAV (73 aa)) form the S1 motif domain.

The protein belongs to the polyribonucleotide nucleotidyltransferase family. Mg(2+) serves as cofactor.

It localises to the cytoplasm. It catalyses the reaction RNA(n+1) + phosphate = RNA(n) + a ribonucleoside 5'-diphosphate. Involved in mRNA degradation. Catalyzes the phosphorolysis of single-stranded polyribonucleotides processively in the 3'- to 5'-direction. This is Polyribonucleotide nucleotidyltransferase from Beutenbergia cavernae (strain ATCC BAA-8 / DSM 12333 / CCUG 43141 / JCM 11478 / NBRC 16432 / NCIMB 13614 / HKI 0122).